A 641-amino-acid chain; its full sequence is WW domain-binding protein 11 (641 aa).

Residues 1 to 11 (MGRRSTSSTKS) show a composition bias toward polar residues. Residues 1–37 (MGRRSTSSTKSGKFMNPTDQARKEARKRELKKNKKQR) form a disordered region. The required for nuclear import stretch occupies residues 1-45 (MGRRSTSSTKSGKFMNPTDQARKEARKRELKKNKKQRMMVRAAVL). Lysine 13 carries the N6-acetyllysine modification. Residues 28–37 (RELKKNKKQR) are compositionally biased toward basic residues. Residues 75–133 (EKVLKDKRKKLRETFERILRLYEKENPDIYKELRKLEVEYEQKRAQLSQYFDAVKNAQH) adopt a coiled-coil conformation. Serine 181 is subject to Phosphoserine. Residues 188-213 (HGVPRLPPGRKPPGPPPGPPPPQVLQ) form a disordered region. An Omega-N-methylarginine modification is found at arginine 192. The span at 192–210 (RLPPGRKPPGPPPGPPPPQ) shows a compositional bias: pro residues. Residues 217–221 (RKVGF) are interaction with PP1. Tyrosine 236 is subject to Phosphotyrosine. The tract at residues 236 to 550 (YSPELAQRGH…IQRPKADDAS (315 aa)) is disordered. Serine 237 is modified (phosphoserine). Over residues 253-263 (SEDDGYPEDMD) the composition is skewed to acidic residues. Residues 276 to 304 (TDRSDAESDGDEFGHREDSERDNTEEKKS) are compositionally biased toward basic and acidic residues. A phosphoserine mark is found at serine 279 and serine 283. The tract at residues 306–310 (LSVRF) is interaction with PP1. The segment covering 351–365 (EFSEEEDADDSDDSE) has biased composition (acidic residues). Serine 353, serine 361, and serine 364 each carry phosphoserine. Residues 366–380 (AEKQSQKQHKDDGHS) show a composition bias toward basic and acidic residues. Residues 381–404 (DSTAAASSQQQAPPQSAPASQIQA) are compositionally biased toward low complexity. Pro residues-rich tracts occupy residues 405–447 (PPMP…PPGM), 456–504 (RLLP…PPRP), and 510–530 (PLVP…PLPN). The PGR motif lies at 455-466 (PRLLPPGPPPGR). Lysine 557 participates in a covalent cross-link: Glycyl lysine isopeptide (Lys-Gly) (interchain with G-Cter in SUMO2). Lysine 565 bears the N6-acetyllysine mark. Lysine 572 is covalently cross-linked (Glycyl lysine isopeptide (Lys-Gly) (interchain with G-Cter in SUMO2)). A disordered region spans residues 588–620 (ENKGATAVPQRRSEDDSAVPVAKAAPRSGPSVA). Residue serine 600 is modified to Phosphoserine. Positions 633 to 641 (FMKEMEGLL) are required for nuclear export.

In terms of assembly, interacts via the PGR motif with PQBP1 in the nucleus. Interacts with the WW domains of WBP4. Interacts with PPP1CA, PPP1CB and PPP1CC. Ubiquitously expressed, with highest levels in testis.

The protein resides in the nucleus. Its subcellular location is the cytoplasm. Functionally, activates pre-mRNA splicing. May inhibit PP1 phosphatase activity. The protein is WW domain-binding protein 11 (Wbp11) of Mus musculus (Mouse).